The sequence spans 262 residues: Tryptophan synthase alpha chain (262 aa).

Catalysis depends on proton acceptor residues Glu-49 and Asp-60.

Belongs to the TrpA family. Tetramer of two alpha and two beta chains.

It carries out the reaction (1S,2R)-1-C-(indol-3-yl)glycerol 3-phosphate + L-serine = D-glyceraldehyde 3-phosphate + L-tryptophan + H2O. The protein operates within amino-acid biosynthesis; L-tryptophan biosynthesis; L-tryptophan from chorismate: step 5/5. The alpha subunit is responsible for the aldol cleavage of indoleglycerol phosphate to indole and glyceraldehyde 3-phosphate. This is Tryptophan synthase alpha chain from Caldanaerobacter subterraneus subsp. tengcongensis (strain DSM 15242 / JCM 11007 / NBRC 100824 / MB4) (Thermoanaerobacter tengcongensis).